The primary structure comprises 423 residues: UDP-N-acetylglucosamine 1-carboxyvinyltransferase 2 (423 aa).

Residue 23-24 (KN) coordinates phosphoenolpyruvate. Arg-93 serves as a coordination point for UDP-N-acetyl-alpha-D-glucosamine. The Proton donor role is filled by Cys-117. Cys-117 carries the 2-(S-cysteinyl)pyruvic acid O-phosphothioketal modification. Residues 122-126 (RPIDQ), Asp-305, and Ile-327 contribute to the UDP-N-acetyl-alpha-D-glucosamine site.

The protein belongs to the EPSP synthase family. MurA subfamily.

It localises to the cytoplasm. It catalyses the reaction phosphoenolpyruvate + UDP-N-acetyl-alpha-D-glucosamine = UDP-N-acetyl-3-O-(1-carboxyvinyl)-alpha-D-glucosamine + phosphate. It functions in the pathway cell wall biogenesis; peptidoglycan biosynthesis. Functionally, cell wall formation. Adds enolpyruvyl to UDP-N-acetylglucosamine. The sequence is that of UDP-N-acetylglucosamine 1-carboxyvinyltransferase 2 from Listeria monocytogenes serotype 4b (strain F2365).